Here is a 389-residue protein sequence, read N- to C-terminus: Abscission/NoCut checkpoint regulator (389 aa).

The FYVE-type zinc-finger motif lies at 1–58; sequence MESRCYGCAVKFTLFKKEYGCKNCGRAFCNGCLSFSALVPRAGNTQQKVCKQCHTILT. Residues Cys5, Cys8, Cys21, Cys24, Cys29, Cys32, Cys50, and Cys53 each coordinate Zn(2+). Position 69 is a phosphoserine (Ser69). The short motif at 99 to 112 is the MIM1-A element; the sequence is DQAIAERLARLRQE. Lys132 participates in a covalent cross-link: Glycyl lysine isopeptide (Lys-Gly) (interchain with G-Cter in SUMO2). Disordered regions lie at residues 158-177 and 204-227; these read PSHTVRPAHQAPDTRTQAQQ and QNDLNKGAARSQRTNSQGQASQSL. The segment covering 167–177 has biased composition (low complexity); that stretch reads QAPDTRTQAQQ. The span at 214 to 226 shows a compositional bias: polar residues; the sequence is SQRTNSQGQASQS. Ser219 carries the phosphoserine modification. Residues 226–261 adopt a coiled-coil conformation; that stretch reads SLEEEKYKLLAEAAVELQEENTRQERILALAKRLAV. The MIM1-B signature appears at 252–265; the sequence is ILALAKRLAVLKGQ. The residue at position 280 (Ser280) is a Phosphoserine.

In terms of assembly, interacts (via MIM1-B) with VPS4A; interaction takes place at the midbody ring following cytokinesis checkpoint activation.

The protein resides in the cytoplasm. It localises to the cytoskeleton. It is found in the microtubule organizing center. The protein localises to the centrosome. Its subcellular location is the cleavage furrow. The protein resides in the midbody. It localises to the midbody ring. Its function is as follows. Key regulator of abscission step in cytokinesis: part of the cytokinesis checkpoint, a process required to delay abscission to prevent both premature resolution of intercellular chromosome bridges and accumulation of DNA damage. Together with CHMP4C, required to retain abscission-competent VPS4 (VPS4A and/or VPS4B) at the midbody ring until abscission checkpoint signaling is terminated at late cytokinesis. Deactivation of AURKB results in dephosphorylation of CHMP4C followed by its dissociation from ZFYVE19/ANCHR and VPS4 and subsequent abscission. In Mus musculus (Mouse), this protein is Abscission/NoCut checkpoint regulator (Zfyve19).